The chain runs to 1622 residues: WD repeat-containing protein 97 (1622 aa).

WD repeat units lie at residues 187–233 (SEQG…RRLV), 290–329 (LHKT…RMVF), 331–370 (GHTG…QVGE), 552–592 (ELRC…TVFQ), 594–633 (EAHS…EESL), and 687–726 (DPTD…LRLL). 2 disordered regions span residues 1090 to 1112 (GEKP…EDEE) and 1453 to 1472 (LHPA…EETD). Positions 1094–1118 (GEEGEEDKKEEEEEKEDEELDWALA) form a coiled coil. A compositionally biased stretch (acidic residues) spans 1096–1112 (EGEEDKKEEEEEKEDEE).

In Homo sapiens (Human), this protein is WD repeat-containing protein 97.